Consider the following 291-residue polypeptide: 4-hydroxy-tetrahydrodipicolinate synthase (291 aa).

Residue Thr-45 coordinates pyruvate. The active-site Proton donor/acceptor is the Tyr-133. Catalysis depends on Lys-161, which acts as the Schiff-base intermediate with substrate. Ile-203 contacts pyruvate.

The protein belongs to the DapA family. As to quaternary structure, homotetramer; dimer of dimers.

The protein resides in the cytoplasm. It catalyses the reaction L-aspartate 4-semialdehyde + pyruvate = (2S,4S)-4-hydroxy-2,3,4,5-tetrahydrodipicolinate + H2O + H(+). The protein operates within amino-acid biosynthesis; L-lysine biosynthesis via DAP pathway; (S)-tetrahydrodipicolinate from L-aspartate: step 3/4. Its function is as follows. Catalyzes the condensation of (S)-aspartate-beta-semialdehyde [(S)-ASA] and pyruvate to 4-hydroxy-tetrahydrodipicolinate (HTPA). This Neisseria meningitidis serogroup C / serotype 2a (strain ATCC 700532 / DSM 15464 / FAM18) protein is 4-hydroxy-tetrahydrodipicolinate synthase.